A 452-amino-acid chain; its full sequence is UDP-N-acetylmuramate--L-alanine ligase (452 aa).

121–127 (GTHGKTT) contributes to the ATP binding site.

This sequence belongs to the MurCDEF family.

Its subcellular location is the cytoplasm. It carries out the reaction UDP-N-acetyl-alpha-D-muramate + L-alanine + ATP = UDP-N-acetyl-alpha-D-muramoyl-L-alanine + ADP + phosphate + H(+). The protein operates within cell wall biogenesis; peptidoglycan biosynthesis. Cell wall formation. The protein is UDP-N-acetylmuramate--L-alanine ligase of Christiangramia forsetii (strain DSM 17595 / CGMCC 1.15422 / KT0803) (Gramella forsetii).